We begin with the raw amino-acid sequence, 682 residues long: Pesticidal crystal protein Cry19Ba (682 aa).

The protein belongs to the delta endotoxin family.

Its function is as follows. Promotes colloidosmotic lysis by binding to the midgut epithelial cells of mosquitos. Has larvicidal activity against Culex pipiens molestus, but not to Anopheles stephensi. This is Pesticidal crystal protein Cry19Ba from Bacillus thuringiensis subsp. higo.